The chain runs to 792 residues: LPS-assembly protein LptD (792 aa).

Positions M1–A22 are cleaved as a signal peptide.

Belongs to the LptD family. In terms of assembly, component of the lipopolysaccharide transport and assembly complex. Interacts with LptE and LptA.

It localises to the cell outer membrane. Its function is as follows. Together with LptE, is involved in the assembly of lipopolysaccharide (LPS) at the surface of the outer membrane. The polypeptide is LPS-assembly protein LptD (Xylella fastidiosa (strain 9a5c)).